Here is a 93-residue protein sequence, read N- to C-terminus: MDGIKYAVFTDKSIRLLGKNQYTSNVESGSTRTEIKHWVELFFGVKVIAMNSHRLPGKGRRMGPTMGHTMHYRRMIITLQPGYSIPPLRKKRT.

Belongs to the universal ribosomal protein uL23 family. In terms of assembly, part of the 50S ribosomal subunit.

The protein resides in the plastid. It localises to the chloroplast. Its function is as follows. Binds to 23S rRNA. The chain is Large ribosomal subunit protein uL23c (rpl23) from Fragaria ananassa (Strawberry).